The chain runs to 161 residues: RNA pyrophosphohydrolase (161 aa).

In terms of domain architecture, Nudix hydrolase spans 12 to 154 (PYRIGVGMVI…KRKLYKAVIN (143 aa)). The Nudix box motif lies at 46-67 (GGIILGETYSKAVLREMKEEIG).

This sequence belongs to the Nudix hydrolase family. RppH subfamily. Requires a divalent metal cation as cofactor.

Its function is as follows. Accelerates the degradation of transcripts by removing pyrophosphate from the 5'-end of triphosphorylated RNA, leading to a more labile monophosphorylated state that can stimulate subsequent ribonuclease cleavage. This chain is RNA pyrophosphohydrolase, found in Orientia tsutsugamushi (strain Boryong) (Rickettsia tsutsugamushi).